We begin with the raw amino-acid sequence, 561 residues long: Long-chain-fatty-acid--CoA ligase (561 aa).

Tyr-213 to Ala-224 contacts ATP.

Belongs to the ATP-dependent AMP-binding enzyme family. Mg(2+) serves as cofactor.

It is found in the membrane. The enzyme catalyses a long-chain fatty acid + ATP + CoA = a long-chain fatty acyl-CoA + AMP + diphosphate. It functions in the pathway lipid metabolism; fatty acid beta-oxidation. Functionally, catalyzes the esterification, concomitant with transport, of exogenous long-chain fatty acids into metabolically active CoA thioesters for subsequent degradation or incorporation into phospholipids. This is Long-chain-fatty-acid--CoA ligase (fadD) from Salmonella typhi.